The primary structure comprises 293 residues: Elongation factor Ts (293 aa).

The tract at residues 79–82 (TDFV) is involved in Mg(2+) ion dislocation from EF-Tu.

This sequence belongs to the EF-Ts family.

It localises to the cytoplasm. Its function is as follows. Associates with the EF-Tu.GDP complex and induces the exchange of GDP to GTP. It remains bound to the aminoacyl-tRNA.EF-Tu.GTP complex up to the GTP hydrolysis stage on the ribosome. The polypeptide is Elongation factor Ts (Bacillus licheniformis (strain ATCC 14580 / DSM 13 / JCM 2505 / CCUG 7422 / NBRC 12200 / NCIMB 9375 / NCTC 10341 / NRRL NRS-1264 / Gibson 46)).